Reading from the N-terminus, the 1893-residue chain is Endoribonuclease Dicer (1893 aa).

Residues 41 to 217 (LLEAALDHNT…DLEEKIQKLE (177 aa)) enclose the Helicase ATP-binding domain. Residue 54-61 (LNSGSGKT) coordinates ATP. A DECH box motif is present at residues 165-168 (DECH). The interval 400–424 (VSWSDSEDDDDEDEEIEEKEKTETS) is disordered. Positions 404–416 (DSEDDDDEDEEIE) are enriched in acidic residues. The Helicase C-terminal domain maps to 424–593 (SFPSPFTNIL…SIDCGNTESE (170 aa)). The region spanning 621–713 (AIGHINRYCA…MPVGKETVKY (93 aa)) is the Dicer dsRNA-binding fold domain. The segment at 718 to 737 (DLHDEEETSVPGRPGSTKRR) is disordered. The PAZ domain occupies 886–1036 (KFVEDIEKSE…LVPELCAIHP (151 aa)). 2 RNase III domains span residues 1249–1380 (TSDM…ETSG) and 1637–1795 (FENF…MDSG). The Mg(2+) site is built by E1293, D1371, E1374, E1676, D1781, and E1784. Residues 1820-1885 (VPRSPVRELL…ARRALRSLKA (66 aa)) form the DRBM domain.

Belongs to the helicase family. Dicer subfamily. In terms of assembly, component of the RISC loading complex (RLC), or micro-RNA (miRNA) loading complex (miRLC), which is composed of dicer1, ago2 and tarbp2; dicer1 and tarbp2 are required to process precursor miRNAs (pre-miRNAs) to mature miRNAs and then load them onto ago2. Note that the trimeric RLC/miRLC is also referred to as RISC. Mg(2+) is required as a cofactor. It depends on Mn(2+) as a cofactor.

The protein resides in the cytoplasm. It catalyses the reaction Endonucleolytic cleavage to 5'-phosphomonoester.. Double-stranded RNA (dsRNA) endoribonuclease playing a central role in short dsRNA-mediated post-transcriptional gene silencing. Cleaves naturally occurring long dsRNAs and short hairpin pre-microRNAs (miRNA) into fragments of twenty-one to twenty-three nucleotides with 3' overhang of two nucleotides, producing respectively short interfering RNAs (siRNA) and mature microRNAs. SiRNAs and miRNAs serve as guide to direct the RNA-induced silencing complex (RISC) to complementary RNAs to degrade them or prevent their translation. Gene silencing mediated by siRNAs, also called RNA interference, controls the elimination of transcripts from mobile and repetitive DNA elements of the genome but also the degradation of exogenous RNA of viral origin for instance. The miRNA pathway on the other side is a mean to specifically regulate the expression of target genes. The chain is Endoribonuclease Dicer (dicer1) from Xenopus tropicalis (Western clawed frog).